The sequence spans 275 residues: Protein unc-50 homolog (275 aa).

Over residues 1–26 the composition is skewed to polar residues; that stretch reads MTQYSHVKYTQSPTPSVVSGYSSASR. Residues 1–39 are disordered; that stretch reads MTQYSHVKYTQSPTPSVVSGYSSASRLHSPLPPPANHRR. At 1–99 the chain is on the cytoplasmic side; the sequence is MTQYSHVKYT…TKSQFARDDP (99 aa). The chain crosses the membrane as a helical span at residues 100 to 120; that stretch reads AFLVLLVVCLCVTSLGFAYVL. The Lumenal portion of the chain corresponds to 121–129; that stretch reads GLSFWQSIS. Residues 130–150 form a helical membrane-spanning segment; the sequence is FIFYVVFVDCIFVGIIIASFF. Residues 151–178 are Cytoplasmic-facing; that stretch reads WAVTNRYLRTNSLEPDIEWGYAFDVHLN. A helical transmembrane segment spans residues 179–199; that stretch reads AFFPPLMLLHFIQLFFYNWLI. Over 200 to 207 the chain is Lumenal; it reads SQTWFISR. A helical transmembrane segment spans residues 208-228; that stretch reads FLGNTFWLMGMGYYVYITFLG. Over 229 to 239 the chain is Cytoplasmic; it reads YNCIPHLKNTR. The chain crosses the membrane as a helical span at residues 240 to 260; the sequence is IILIALPIIFLLFLVVTIIGW. Topologically, residues 261–275 are lumenal; it reads NATISFVNFYKYRVY.

This sequence belongs to the unc-50 family.

It localises to the golgi apparatus membrane. Its function is as follows. Required for cell surface expression of acetylcholine receptors. The protein is Protein unc-50 homolog of Drosophila melanogaster (Fruit fly).